An 869-amino-acid chain; its full sequence is Probable beta-glucosidase F (869 aa).

Residues 1–19 (MRVLSAIALVASLASSALS) form the signal peptide. Residues N77 and N261 are each glycosylated (N-linked (GlcNAc...) asparagine). D289 is a catalytic residue. 4 N-linked (GlcNAc...) asparagine glycosylation sites follow: N332, N364, N399, and N478. The tract at residues 677-697 (STYPPTRPPKGPTPTYPTAIP) is disordered. Residues 681–691 (PTRPPKGPTPT) are compositionally biased toward pro residues. N728 carries N-linked (GlcNAc...) asparagine glycosylation.

Belongs to the glycosyl hydrolase 3 family.

Its subcellular location is the secreted. The catalysed reaction is Hydrolysis of terminal, non-reducing beta-D-glucosyl residues with release of beta-D-glucose.. Its pathway is glycan metabolism; cellulose degradation. Its function is as follows. Beta-glucosidases are one of a number of cellulolytic enzymes involved in the degradation of cellulosic biomass. Catalyzes the last step releasing glucose from the inhibitory cellobiose. This Aspergillus fumigatus (strain CBS 144.89 / FGSC A1163 / CEA10) (Neosartorya fumigata) protein is Probable beta-glucosidase F (bglF).